The chain runs to 259 residues: BTB/POZ domain-containing protein KCTD4 (259 aa).

One can recognise a BTB domain in the interval 33 to 134; it reads TLMTLNVGGY…EVKSRWEKEQ (102 aa).

This chain is BTB/POZ domain-containing protein KCTD4 (Kctd4), found in Mus musculus (Mouse).